Reading from the N-terminus, the 588-residue chain is Zeta-carotene desaturase, chloroplastic/chromoplastic (588 aa).

This sequence belongs to the zeta carotene desaturase family. Requires NAD(+) as cofactor. NADP(+) is required as a cofactor. The cofactor is FAD.

It is found in the plastid. Its subcellular location is the chloroplast. The protein localises to the chromoplast. The catalysed reaction is 9,9'-di-cis-zeta-carotene + 2 a quinone = 7,7',9,9'-tetra-cis-lycopene + 2 a quinol. It participates in carotenoid biosynthesis; lycopene biosynthesis. In terms of biological role, catalyzes the conversion of zeta-carotene to lycopene via the intermediary of neurosporene. It carries out two consecutive desaturations (introduction of double bonds) at positions C-7 and C-7'. The chain is Zeta-carotene desaturase, chloroplastic/chromoplastic (ZDS) from Solanum lycopersicum (Tomato).